The sequence spans 106 residues: Flagellar transcriptional regulator FlhD (106 aa).

It belongs to the FlhD family. As to quaternary structure, homodimer; disulfide-linked. Forms a heterohexamer composed of two FlhC and four FlhD subunits. Each FlhC binds a FlhD dimer, forming a heterotrimer, and a hexamer assembles by dimerization of two heterotrimers.

It is found in the cytoplasm. Functionally, functions in complex with FlhC as a master transcriptional regulator that regulates transcription of several flagellar and non-flagellar operons by binding to their promoter region. Activates expression of class 2 flagellar genes, including fliA, which is a flagellum-specific sigma factor that turns on the class 3 genes. Also regulates genes whose products function in a variety of physiological pathways. This Burkholderia mallei (strain SAVP1) protein is Flagellar transcriptional regulator FlhD.